Here is a 119-residue protein sequence, read N- to C-terminus: Large ribosomal subunit protein bL20 (119 aa).

It belongs to the bacterial ribosomal protein bL20 family.

Its function is as follows. Binds directly to 23S ribosomal RNA and is necessary for the in vitro assembly process of the 50S ribosomal subunit. It is not involved in the protein synthesizing functions of that subunit. This chain is Large ribosomal subunit protein bL20, found in Coxiella burnetii (strain CbuK_Q154) (Coxiella burnetii (strain Q154)).